The following is a 710-amino-acid chain: Ent-copalyl diphosphate synthase 1 (710 aa).

Position 145 (Lys145) interacts with substrate. Residues Asp277 and Asp279 each coordinate Mg(2+). The DXDD motif signature appears at 277–280; it reads DIDD. Lys364 is a substrate binding site.

The protein belongs to the terpene synthase family. Tpsc subfamily. Mg(2+) is required as a cofactor. Expressed in germinating seeds and leaves.

The catalysed reaction is (2E,6E,10E)-geranylgeranyl diphosphate = ent-copalyl diphosphate. The protein operates within plant hormone biosynthesis; gibberellin biosynthesis. It functions in the pathway secondary metabolite biosynthesis; terpenoid biosynthesis. Functionally, involved in the biosynthesis of ent-kaurene diterpenoids natural products such as oridonin, miltiradiene, eriocalyxin B and nezukol, known to exhibit antitumor, anti-inflammatory and antibacterial activities, and in the production of gibberellins phytohormones. Catalyzes the conversion of (2E,6E,10E)-geranylgeranyl diphosphate (GGPP) to ent-copalyl diphosphate (ent-CPP). In Isodon eriocalyx (Plectranthus eriocalyx), this protein is Ent-copalyl diphosphate synthase 1.